The following is a 475-amino-acid chain: Protein nucleotidyltransferase YdiU (475 aa).

ATP is bound by residues Gly-82, Gly-84, Arg-85, Lys-105, Asp-117, Gly-118, Arg-168, and Arg-175. Asp-240 (proton acceptor) is an active-site residue. Mg(2+) is bound by residues Asn-241 and Asp-250. Residue Asp-250 participates in ATP binding.

This sequence belongs to the SELO family. Requires Mg(2+) as cofactor. It depends on Mn(2+) as a cofactor.

The catalysed reaction is L-seryl-[protein] + ATP = 3-O-(5'-adenylyl)-L-seryl-[protein] + diphosphate. It carries out the reaction L-threonyl-[protein] + ATP = 3-O-(5'-adenylyl)-L-threonyl-[protein] + diphosphate. The enzyme catalyses L-tyrosyl-[protein] + ATP = O-(5'-adenylyl)-L-tyrosyl-[protein] + diphosphate. It catalyses the reaction L-histidyl-[protein] + UTP = N(tele)-(5'-uridylyl)-L-histidyl-[protein] + diphosphate. The catalysed reaction is L-seryl-[protein] + UTP = O-(5'-uridylyl)-L-seryl-[protein] + diphosphate. It carries out the reaction L-tyrosyl-[protein] + UTP = O-(5'-uridylyl)-L-tyrosyl-[protein] + diphosphate. Nucleotidyltransferase involved in the post-translational modification of proteins. It can catalyze the addition of adenosine monophosphate (AMP) or uridine monophosphate (UMP) to a protein, resulting in modifications known as AMPylation and UMPylation. In Aeromonas salmonicida (strain A449), this protein is Protein nucleotidyltransferase YdiU.